A 75-amino-acid polypeptide reads, in one-letter code: Pro-glucagon (75 aa).

This sequence belongs to the glucagon family.

Its subcellular location is the secreted. Functionally, plays a key role in glucose metabolism and homeostasis. Regulates blood glucose by increasing gluconeogenesis and decreasing glycolysis. This Amia calva (Bowfin) protein is Pro-glucagon (gcg).